A 139-amino-acid polypeptide reads, in one-letter code: D-ribose pyranase (139 aa).

The active-site Proton donor is the His20. Residues Asp28, His106, and 128–130 (YAN) contribute to the substrate site.

This sequence belongs to the RbsD / FucU family. RbsD subfamily. As to quaternary structure, homodecamer.

The protein localises to the cytoplasm. It catalyses the reaction beta-D-ribopyranose = beta-D-ribofuranose. The protein operates within carbohydrate metabolism; D-ribose degradation; D-ribose 5-phosphate from beta-D-ribopyranose: step 1/2. Its function is as follows. Catalyzes the interconversion of beta-pyran and beta-furan forms of D-ribose. The chain is D-ribose pyranase from Salmonella agona (strain SL483).